The primary structure comprises 425 residues: Synaptotagmin-4 (425 aa).

The Vesicular portion of the chain corresponds to 1 to 16 (MAPITTSREEFDEIPT). The helical transmembrane segment at 17 to 37 (VVGIFSAFGLVFTVSLFAWIC) threads the bilayer. The Cytoplasmic portion of the chain corresponds to 38–425 (CQRKSSKSNK…IAKWHVLCDG (388 aa)). The segment covering 73–83 (FGADDKNEVKN) has biased composition (basic and acidic residues). Disordered stretches follow at residues 73–93 (FGAD…NSLH) and 127–147 (LEGE…SLTS). Ser135 bears the Phosphoserine; by MAPK8 mark. Positions 135–146 (SPESLKSSTSLT) are enriched in low complexity. C2 domains lie at 153-274 (KLGT…MLMN) and 287-420 (GRGE…AKWH). Ca(2+) is bound by residues Asp246, Ser249, and Asp252.

The protein belongs to the synaptotagmin family. Interacts with KIF1A; the interaction increases in presence of calcium and decreases when SYT4 is phosphorylated at Ser-135. Ca(2+) is required as a cofactor. Phosphorylation at Ser-135 by MAPK8/JNK1 reduces interaction with KIF1A and neuronal dense core vesicles mobility. As to expression, expressed in melanocytes. Expressed in brain. Within brain, expression is highest in hippocampus, with substantial levels also detected in amygdala and thalamus.

It is found in the cytoplasmic vesicle. Its subcellular location is the secretory vesicle. The protein resides in the neuronal dense core vesicle membrane. Functionally, synaptotagmin family member which does not bind Ca(2+). Involved in neuronal dense core vesicles (DCVs) mobility through its interaction with KIF1A. Upon increased neuronal activity, phosphorylation by MAPK8/JNK1 destabilizes the interaction with KIF1A and captures DCVs to synapses. Plays a role in dendrite formation by melanocytes. The sequence is that of Synaptotagmin-4 (SYT4) from Homo sapiens (Human).